A 346-amino-acid polypeptide reads, in one-letter code: Small glutamine-rich tetratricopeptide repeat-containing protein 2 (346 aa).

4 TPR repeats span residues 102–135, 136–169, 170–203, and 205–229; these read AEDLKMQGNKAMANKDYELAINKYTEAIKVLPTN, AIYYANRAAAHSSLKEYDQAVKDAESAISIDPSY, FRGYSRLGFAKYAQGKPEEALEAYKKVLDIEGDN, and TEAMKRDYESAKKKVEQSLNLEKTV. A disordered region spans residues 219 to 249; that stretch reads VEQSLNLEKTVPEQSRDADVDASQGASAGGL. Basic and acidic residues predominate over residues 228–237; that stretch reads TVPEQSRDAD. The residue at position 308 (threonine 308) is a Phosphothreonine. A disordered region spans residues 325 to 346; that stretch reads GNLFGGAGAQSTDETPDNENKQ.

It belongs to the SGT family. As to quaternary structure, interacts with HSC82, HSP104, MDY2, SSA1 and SSA2.

Its subcellular location is the cytoplasm. Co-chaperone that binds to the molecular chaperone Hsp70 (SSA1 and SSA2). Regulates Hsp70 ATPase activity. Required for recovery from heat shock. The polypeptide is Small glutamine-rich tetratricopeptide repeat-containing protein 2 (SGT2) (Saccharomyces cerevisiae (strain ATCC 204508 / S288c) (Baker's yeast)).